The following is a 387-amino-acid chain: Thermostable celloxylanase (387 aa).

The region spanning 41–382 (AEDIPSLAEA…KPAFWAIVDP (342 aa)) is the GH10 domain. E185 functions as the Proton donor in the catalytic mechanism. E293 (nucleophile) is an active-site residue.

It belongs to the glycosyl hydrolase 10 (cellulase F) family.

The enzyme catalyses Endohydrolysis of (1-&gt;4)-beta-D-glucosidic linkages in cellulose, lichenin and cereal beta-D-glucans.. The catalysed reaction is Endohydrolysis of (1-&gt;4)-beta-D-xylosidic linkages in xylans.. It participates in glycan degradation; xylan degradation. In terms of biological role, active toward xylan, carboxymethylcellulose, P-nitrophenyl-beta-D-xylopyranoside and P-nitrophenyl-beta-D-cellobioside. The polypeptide is Thermostable celloxylanase (xynB) (Thermoclostridium stercorarium (Clostridium stercorarium)).